The primary structure comprises 402 residues: UDP-N-acetylmuramoylalanine--D-glutamate ligase (402 aa).

97 to 103 (GTNGKTT) contributes to the ATP binding site.

Belongs to the MurCDEF family.

Its subcellular location is the cytoplasm. The catalysed reaction is UDP-N-acetyl-alpha-D-muramoyl-L-alanine + D-glutamate + ATP = UDP-N-acetyl-alpha-D-muramoyl-L-alanyl-D-glutamate + ADP + phosphate + H(+). It functions in the pathway cell wall biogenesis; peptidoglycan biosynthesis. Functionally, cell wall formation. Catalyzes the addition of glutamate to the nucleotide precursor UDP-N-acetylmuramoyl-L-alanine (UMA). The protein is UDP-N-acetylmuramoylalanine--D-glutamate ligase of Campylobacter jejuni subsp. jejuni serotype O:23/36 (strain 81-176).